The following is a 426-amino-acid chain: Glutamate-1-semialdehyde 2,1-aminomutase (426 aa).

Position 265 is an N6-(pyridoxal phosphate)lysine (lysine 265).

Belongs to the class-III pyridoxal-phosphate-dependent aminotransferase family. HemL subfamily. As to quaternary structure, homodimer. Requires pyridoxal 5'-phosphate as cofactor.

Its subcellular location is the cytoplasm. It catalyses the reaction (S)-4-amino-5-oxopentanoate = 5-aminolevulinate. Its pathway is porphyrin-containing compound metabolism; protoporphyrin-IX biosynthesis; 5-aminolevulinate from L-glutamyl-tRNA(Glu): step 2/2. This chain is Glutamate-1-semialdehyde 2,1-aminomutase, found in Neisseria gonorrhoeae (strain NCCP11945).